A 148-amino-acid polypeptide reads, in one-letter code: Putative nickel-responsive regulator (148 aa).

Ni(2+)-binding residues include H88, H99, H101, and C107.

It belongs to the transcriptional regulatory CopG/NikR family. In terms of assembly, homotetramer. Ni(2+) serves as cofactor.

Functionally, transcriptional regulator. This Helicobacter pylori (strain ATCC 700392 / 26695) (Campylobacter pylori) protein is Putative nickel-responsive regulator.